Here is a 310-residue protein sequence, read N- to C-terminus: Acetylglutamate kinase (310 aa).

Substrate-binding positions include 70-71, Arg-92, and Asn-191; that span reads GG.

This sequence belongs to the acetylglutamate kinase family. ArgB subfamily.

Its subcellular location is the cytoplasm. It carries out the reaction N-acetyl-L-glutamate + ATP = N-acetyl-L-glutamyl 5-phosphate + ADP. It functions in the pathway amino-acid biosynthesis; L-arginine biosynthesis; N(2)-acetyl-L-ornithine from L-glutamate: step 2/4. In terms of biological role, catalyzes the ATP-dependent phosphorylation of N-acetyl-L-glutamate. In Corynebacterium diphtheriae (strain ATCC 700971 / NCTC 13129 / Biotype gravis), this protein is Acetylglutamate kinase.